A 210-amino-acid polypeptide reads, in one-letter code: MKLKFCGFTSIKDVTAASQLPIDAIGFIHYEKSKRHQTITQIKKLASAVPNHIDKVCVMVNPDLTTIEHVLSNTSINTIQLHGTESIDFIQEIKKKYSSIKITKALAADENIIQNINKYKGFVDLFIIDTPSVSYGGTGQTYDWTILKHIKDIPYLIAGGINSENIQTVNQLKLSHQGYDLASGIEVNGRKDIEKMTAIVNIVKGDRDNE.

It belongs to the TrpF family.

It catalyses the reaction N-(5-phospho-beta-D-ribosyl)anthranilate = 1-(2-carboxyphenylamino)-1-deoxy-D-ribulose 5-phosphate. The protein operates within amino-acid biosynthesis; L-tryptophan biosynthesis; L-tryptophan from chorismate: step 3/5. This chain is N-(5'-phosphoribosyl)anthranilate isomerase, found in Staphylococcus aureus (strain Mu3 / ATCC 700698).